A 587-amino-acid chain; its full sequence is Phosphatidylinositol-3-phosphatase SAC1 (587 aa).

Topologically, residues 1 to 520 (MAATAYEHLK…SPLSVPRDWK (520 aa)) are cytoplasmic. Positions 122–451 (LNHVLSTDGF…ANACAKQYAG (330 aa)) constitute an SAC domain. The essential for phosphatidylinositol-4-phosphate phosphatase activity stretch occupies residues 452 to 587 (TGALKTDFTR…PRLVQKEKID (136 aa)). At lysine 456 the chain carries N6-acetyllysine. The helical transmembrane segment at 521 to 541 (FLALPIIMVVAFSMCIICLLM) threads the bilayer. The Lumenal segment spans residues 542-548 (AGDTWTE). The helical transmembrane segment at 549–569 (TLAYVLFWGVASIGTFFIILY) threads the bilayer. Topologically, residues 570-587 (NGKDFVDAPRLVQKEKID) are cytoplasmic.

In terms of assembly, interacts with TMEM39A. Interacts with SEC23A and SEC24A; this interaction is reduced in the absence of TMEM39A. Interacts with PLEKHA3 and VAPA and/or VAPB to form a ternary complex. Detected in spleen, lung, liver, skeletal muscle, kidney, testis and in cerebellar Purkinje cells (at protein level). Ubiquitous. Highly expressed in brain, spleen, liver and kidney.

It is found in the endoplasmic reticulum membrane. The protein resides in the golgi apparatus membrane. It catalyses the reaction a 1,2-diacyl-sn-glycero-3-phospho-(1D-myo-inositol-3-phosphate) + H2O = a 1,2-diacyl-sn-glycero-3-phospho-(1D-myo-inositol) + phosphate. The enzyme catalyses a 1,2-diacyl-sn-glycero-3-phospho-(1D-myo-inositol 4-phosphate) + H2O = a 1,2-diacyl-sn-glycero-3-phospho-(1D-myo-inositol) + phosphate. Its function is as follows. Phosphoinositide phosphatase which catalyzes the hydrolysis of phosphatidylinositol 4-phosphate (PtdIns(4)P), phosphatidylinositol 3-phosphate (PtdIns(3)P) and has low activity towards phosphatidylinositol-3,5-bisphosphate (PtdIns(3,5)P2). Shows a very robust PtdIns(4)P phosphatase activity when it binds PtdIns(4)P in a 'cis' configuration in the cellular environment, with much less activity seen when it binds PtdIns(4)P in 'trans' configuration. PtdIns(4)P phosphatase activity (when it binds PtdIns(4)P in 'trans' configuration) is enhanced in the presence of PLEKHA3. The chain is Phosphatidylinositol-3-phosphatase SAC1 (Sacm1l) from Rattus norvegicus (Rat).